Here is a 469-residue protein sequence, read N- to C-terminus: Swarming motility regulation sensor protein RssA (469 aa).

Transmembrane regions (helical) follow at residues isoleucine 12–tyrosine 32 and valine 167–serine 187. The 215-residue stretch at aspartate 245–tyrosine 459 folds into the Histidine kinase domain. The residue at position 248 (histidine 248) is a Phosphohistidine; by autocatalysis.

It is found in the cell inner membrane. It catalyses the reaction ATP + protein L-histidine = ADP + protein N-phospho-L-histidine.. Its function is as follows. Member of the two-component regulatory system RssA/RssB involved in regulation of swarming motility which has been shown to be inhibited by saturated fatty acids. RssA/RssB regulates cellular fatty acid composition, hemolysin production and cell surface topography. RssA/RssB negatively regulates the activity of SlhBA. It can also act as a negative regulator for the control of the swarming initiation. The polypeptide is Swarming motility regulation sensor protein RssA (rssA) (Serratia marcescens).